Here is a 363-residue protein sequence, read N- to C-terminus: Alanine racemase (363 aa).

Lys-39 acts as the Proton acceptor; specific for D-alanine in catalysis. The residue at position 39 (Lys-39) is an N6-(pyridoxal phosphate)lysine. A substrate-binding site is contributed by Arg-134. Residue Tyr-251 is the Proton acceptor; specific for L-alanine of the active site. A substrate-binding site is contributed by Met-299.

Belongs to the alanine racemase family. It depends on pyridoxal 5'-phosphate as a cofactor.

It carries out the reaction L-alanine = D-alanine. It participates in amino-acid biosynthesis; D-alanine biosynthesis; D-alanine from L-alanine: step 1/1. Its function is as follows. Catalyzes the interconversion of L-alanine and D-alanine. May also act on other amino acids. The protein is Alanine racemase (alr) of Thermodesulfovibrio yellowstonii (strain ATCC 51303 / DSM 11347 / YP87).